The chain runs to 367 residues: 2-aminoethylphosphonate--pyruvate transaminase (367 aa).

Residue Lys-194 is modified to N6-(pyridoxal phosphate)lysine.

Belongs to the class-V pyridoxal-phosphate-dependent aminotransferase family. PhnW subfamily. As to quaternary structure, homodimer. Requires pyridoxal 5'-phosphate as cofactor.

It catalyses the reaction (2-aminoethyl)phosphonate + pyruvate = phosphonoacetaldehyde + L-alanine. Functionally, involved in phosphonate degradation. The protein is 2-aminoethylphosphonate--pyruvate transaminase of Salmonella paratyphi A (strain ATCC 9150 / SARB42).